The sequence spans 182 residues: ATP synthase subunit b, chloroplastic (182 aa).

Residues 33 to 51 (VLNIAILLSGVIYLGRNFL) traverse the membrane as a helical segment.

Belongs to the ATPase B chain family. F-type ATPases have 2 components, F(1) - the catalytic core - and F(0) - the membrane proton channel. F(1) has five subunits: alpha(3), beta(3), gamma(1), delta(1), epsilon(1). F(0) has four main subunits: a(1), b(1), b'(1) and c(10-14). The alpha and beta chains form an alternating ring which encloses part of the gamma chain. F(1) is attached to F(0) by a central stalk formed by the gamma and epsilon chains, while a peripheral stalk is formed by the delta, b and b' chains.

The protein resides in the plastid. It localises to the chloroplast thylakoid membrane. Its function is as follows. F(1)F(0) ATP synthase produces ATP from ADP in the presence of a proton or sodium gradient. F-type ATPases consist of two structural domains, F(1) containing the extramembraneous catalytic core and F(0) containing the membrane proton channel, linked together by a central stalk and a peripheral stalk. During catalysis, ATP synthesis in the catalytic domain of F(1) is coupled via a rotary mechanism of the central stalk subunits to proton translocation. Component of the F(0) channel, it forms part of the peripheral stalk, linking F(1) to F(0). This chain is ATP synthase subunit b, chloroplastic, found in Guillardia theta (Cryptophyte).